A 499-amino-acid chain; its full sequence is L-arabinose isomerase (499 aa).

Residues glutamate 306, glutamate 333, histidine 350, and histidine 449 each contribute to the Mn(2+) site.

It belongs to the arabinose isomerase family. Mn(2+) is required as a cofactor.

The enzyme catalyses beta-L-arabinopyranose = L-ribulose. It functions in the pathway carbohydrate degradation; L-arabinose degradation via L-ribulose; D-xylulose 5-phosphate from L-arabinose (bacterial route): step 1/3. Functionally, catalyzes the conversion of L-arabinose to L-ribulose. The protein is L-arabinose isomerase of Aeromonas salmonicida (strain A449).